A 112-amino-acid chain; its full sequence is Photosystem II reaction center Psb28 protein (112 aa).

The protein belongs to the Psb28 family. Part of the photosystem II complex.

The protein resides in the plastid. Its subcellular location is the cyanelle thylakoid membrane. The protein is Photosystem II reaction center Psb28 protein of Cyanophora paradoxa.